The chain runs to 132 residues: Small ribosomal subunit protein uS8 (132 aa).

Belongs to the universal ribosomal protein uS8 family. As to quaternary structure, part of the 30S ribosomal subunit. Contacts proteins S5 and S12.

Its function is as follows. One of the primary rRNA binding proteins, it binds directly to 16S rRNA central domain where it helps coordinate assembly of the platform of the 30S subunit. This Rickettsia felis (strain ATCC VR-1525 / URRWXCal2) (Rickettsia azadi) protein is Small ribosomal subunit protein uS8.